A 445-amino-acid polypeptide reads, in one-letter code: MSIFIGQLIGFAVIAFIIVKWVVPPVRTLMRNQQEAVRAALAESAEAAKKLADADAMHAKALADAKAESEKVTEEAKQDSERIAAQLSEQAGSEAERIKAQGAQQIQLMRQQLIRQLRTGLGAEAVNKAAEIVRAHVADPQAQSATVDRFLSELEQMAPSSVVIDTAATSRLRAASRQSLAALVEKFDSVAGGLDADGLTNLADELASVAKLLLSETALNKHLAEPTDDSAPKVRLLERLLSDKVSATTLDLLRTAVSNRWSTESNLIDAVEHTARLALLKRAEIAGEVDEVEEQLFRFGRVLDAEPRLSALLSDYTTPAEGRVALLDKALTGRPGVNQTAAALLSQTVGLLRGERADEAVIDLAELAVSRRGEVVAHVSAAAELSDAQRTRLTEVLSRIYGRPVSVQLHVDPELLGGLSITVGDEVIDGSIASRLAAAQTGLPD.

The tract at residues 1–168 (MSIFIGQLIG…PSSVVIDTAA (168 aa)) is ATP synthase subunit b. The helical transmembrane segment at 3–23 (IFIGQLIGFAVIAFIIVKWVV) threads the bilayer. The segment at 169-445 (TSRLRAASRQ…LAAAQTGLPD (277 aa)) is ATP synthase subunit delta.

The protein in the N-terminal section; belongs to the ATPase B chain family. This sequence in the C-terminal section; belongs to the ATPase delta chain family. F-type ATPases have 2 components, F(1) - the catalytic core - and F(0) - the membrane proton channel. F(1) has five subunits: alpha(3), beta(3), gamma(1), delta(1), epsilon(1). F(0) has three main subunits: a(1), b(2) and c(10-14). The alpha and beta chains form an alternating ring which encloses part of the gamma chain. F(1) is attached to F(0) by a central stalk formed by the gamma and epsilon chains, while a peripheral stalk is formed by the delta and b chains.

The protein localises to the cell membrane. Functionally, f(1)F(0) ATP synthase produces ATP from ADP in the presence of a proton or sodium gradient. F-type ATPases consist of two structural domains, F(1) containing the extramembraneous catalytic core and F(0) containing the membrane proton channel, linked together by a central stalk and a peripheral stalk. During catalysis, ATP synthesis in the catalytic domain of F(1) is coupled via a rotary mechanism of the central stalk subunits to proton translocation. Its function is as follows. This fusion protein includes a component of the F(0) channel (subunit b) and of the F(1) subunit (subunit delta). Two copies of subunit b and one of delta together form the peripheral 'stator' stalk which links F(1) to F(0). In Mycolicibacterium smegmatis (strain ATCC 700084 / mc(2)155) (Mycobacterium smegmatis), this protein is ATP synthase subunit b-delta (atpFH).